Consider the following 297-residue polypeptide: MNIAIRNPVPVRREEGSLQVGLDPNDRIETAKVFAVYGKGGIGKSTTSSNLSVAFSKLGKRVLQIGCDPKHDSTFTLTKRLAPTVIDALEAVNFHSEELRAEDFVVEGYNGVKCVEAGGPPAGTGCGGYVVGQTVKLLKEHHLLEDTDVVVFDVLGDVVCGGFASPLQHADRALIVTANDFDSIFAMNRIVAAIHTKSKNYGVRLGGVIANRSAKTDEIDRFNAAVGLRRLAHFPDLDVVRRSRLKKSTLFEMEPTPELKAVTDEYMQLAETLWAGADPCEAVPMKDRDLFEFLGFD.

ATP is bound by residues 41 to 46 (GIGKST) and K70. Position 45 (S45) interacts with Mg(2+). Residues C126 and C160 each contribute to the [4Fe-4S] cluster site. ATP contacts are provided by residues 211 to 212 (NR) and 235 to 237 (PDL).

Belongs to the NifH/BchL/ChlL family. As to quaternary structure, homodimer. Protochlorophyllide reductase is composed of three subunits; BchL, BchN and BchB. [4Fe-4S] cluster serves as cofactor.

It catalyses the reaction chlorophyllide a + oxidized 2[4Fe-4S]-[ferredoxin] + 2 ADP + 2 phosphate = protochlorophyllide a + reduced 2[4Fe-4S]-[ferredoxin] + 2 ATP + 2 H2O. It functions in the pathway porphyrin-containing compound metabolism; bacteriochlorophyll biosynthesis (light-independent). Component of the dark-operative protochlorophyllide reductase (DPOR) that uses Mg-ATP and reduced ferredoxin to reduce ring D of protochlorophyllide (Pchlide) to form chlorophyllide a (Chlide). This reaction is light-independent. The L component serves as a unique electron donor to the NB-component of the complex, and binds Mg-ATP. The chain is Light-independent protochlorophyllide reductase iron-sulfur ATP-binding protein from Methylorubrum extorquens (strain CM4 / NCIMB 13688) (Methylobacterium extorquens).